A 139-amino-acid chain; its full sequence is ATP synthase epsilon chain (139 aa).

It belongs to the ATPase epsilon chain family. In terms of assembly, F-type ATPases have 2 components, CF(1) - the catalytic core - and CF(0) - the membrane proton channel. CF(1) has five subunits: alpha(3), beta(3), gamma(1), delta(1), epsilon(1). CF(0) has three main subunits: a, b and c.

Its subcellular location is the cell inner membrane. In terms of biological role, produces ATP from ADP in the presence of a proton gradient across the membrane. The sequence is that of ATP synthase epsilon chain from Haemophilus ducreyi (strain 35000HP / ATCC 700724).